Reading from the N-terminus, the 272-residue chain is Cerberus (272 aa).

Positions Met1 to Pro19 are cleaved as a signal peptide. Disulfide bonds link Cys168–Cys215, Cys182–Cys229, Cys192–Cys245, and Cys196–Cys247. In terms of domain architecture, CTCK spans Cys168–Glu253. Asn228 carries an N-linked (GlcNAc...) asparagine glycan.

The protein belongs to the DAN family.

It is found in the secreted. Cytokine that acts as a regulator of the activity of Nodal/BMP pathways during the establishment of bilateral asymmetry in the head and trunk of the embryo. This is Cerberus (CER1) from Gallus gallus (Chicken).